The sequence spans 206 residues: MARYLGPKLKLSRREGTDLFLKSGVRAIDSKCKLETAPGQHGARKPRLSEYGTQLREKQKVRRIYGVLEKQFRNYYKDAARTKGNTGENLLQLLETRLDNVVYRMGFGATRAESRQLVSHKSIMVNGRVVNIPSFKVSANDVVSIREKSRTQARIKAALEVAAQREKPTWVEVDNAKMEGAFKRVPERSDLSAEINEQLIVELYSK.

Residues T96–K156 form the S4 RNA-binding domain.

This sequence belongs to the universal ribosomal protein uS4 family. Part of the 30S ribosomal subunit. Contacts protein S5. The interaction surface between S4 and S5 is involved in control of translational fidelity.

Its function is as follows. One of the primary rRNA binding proteins, it binds directly to 16S rRNA where it nucleates assembly of the body of the 30S subunit. In terms of biological role, with S5 and S12 plays an important role in translational accuracy. This is Small ribosomal subunit protein uS4 from Shewanella baltica (strain OS223).